Consider the following 434-residue polypeptide: Nucleobase transporter PlUacP (434 aa).

12 consecutive transmembrane segments (helical) span residues 9–29 (LGFQ…LIVG), 39–59 (LAYL…LQVW), 63–83 (FFGI…GPMI), 93–113 (AIYG…GFFG), 118–138 (FFPP…LIPV), 159–179 (ALSF…TGFI), 181–201 (AISI…MGKV), 218–238 (FYFG…LVAI), 306–326 (VVIT…IAAL), 327–347 (TLLI…GMVV), 365–385 (LLII…PNLF), and 394–414 (ILTS…NFLF).

The protein belongs to the nucleobase:cation symporter-2 (NCS2) (TC 2.A.40) family.

Its subcellular location is the cell membrane. With respect to regulation, inhibited by the proton gradient disruptor carbonyl cyanide m-chlorophenylhydrazone (CCCP), but not by the sodium gradient disruptor ouabain. Hypoxanthine, xanthine, cytosine and uric acid act as competitive inhibitors. Functionally, uptake of the purines adenine and guanine, and the pyrimidine uracil. Transport is probably proton-dependent. The chain is Nucleobase transporter PlUacP from Paenibacillus larvae subsp. larvae (strain NRRL B-3650 / LMG 16245).